We begin with the raw amino-acid sequence, 68 residues long: Small ribosomal subunit protein bS21 (68 aa).

Residues 36–68 (YEKPSEKRARERAAAVRRSRKLERKRAERDGIR) are disordered. Over residues 37-49 (EKPSEKRARERAA) the composition is skewed to basic and acidic residues. Residues 50–59 (AVRRSRKLER) are compositionally biased toward basic residues.

Belongs to the bacterial ribosomal protein bS21 family.

In Zymomonas mobilis subsp. mobilis (strain ATCC 31821 / ZM4 / CP4), this protein is Small ribosomal subunit protein bS21.